Consider the following 738-residue polypeptide: Protein Aster-B (738 aa).

Positions 1–81 (MKGFKLSCTA…SGGKNSKKSQ (81 aa)) are disordered. Polar residues predominate over residues 8 to 19 (CTASNSNRSTPA). S28 and S30 each carry phosphoserine. Positions 41–51 (MVEKGSDHSSD) are enriched in basic and acidic residues. Low complexity predominate over residues 59–70 (QGVQRSCSSQSG). A GRAM domain is found at 96-163 (EDFRKLFKQL…KDICSMTKEK (68 aa)). Residues 254 to 301 (EENEVNDSSSKSSIETKPDASPQLPKKSITNSTLTSTGSSEAPVSFDG) form a disordered region. Residues 259–268 (NDSSSKSSIE) are compositionally biased toward polar residues. S274 carries the phosphoserine modification. Polar residues predominate over residues 281–295 (SITNSTLTSTGSSEA). The region spanning 372–543 (SGRQYVNEVF…ELAKTESTYL (172 aa)) is the VASt domain. At Y389 the chain carries Phosphotyrosine. The interval 544–566 (AEMHRQSPKEKASKTTTVRRRKR) is disordered. Positions 545-556 (EMHRQSPKEKAS) are enriched in basic and acidic residues. S550 and S581 each carry phosphoserine. Phosphothreonine is present on residues T584, T585, and T587. The chain crosses the membrane as a helical span at residues 623-643 (LLLVISCVICFSLVLLVILNM).

The protein resides in the endoplasmic reticulum membrane. Its subcellular location is the cell membrane. In terms of biological role, cholesterol transporter that mediates non-vesicular transport of cholesterol from the plasma membrane (PM) to the endoplasmic reticulum (ER). Contains unique domains for binding cholesterol and the PM, thereby serving as a molecular bridge for the transfer of cholesterol from the PM to the ER. Plays a crucial role in cholesterol homeostasis in the adrenal gland and has the unique ability to localize to the PM based on the level of membrane cholesterol. In lipid-poor conditions localizes to the ER membrane and in response to excess cholesterol in the PM is recruited to the endoplasmic reticulum-plasma membrane contact sites (EPCS) which is mediated by the GRAM domain. At the EPCS, the sterol-binding VASt/ASTER domain binds to the cholesterol in the PM and facilitates its transfer from the PM to ER. In Homo sapiens (Human), this protein is Protein Aster-B (GRAMD1B).